A 56-amino-acid chain; its full sequence is Small ribosomal subunit protein bS21 (56 aa).

This sequence belongs to the bacterial ribosomal protein bS21 family.

In Geobacillus stearothermophilus (Bacillus stearothermophilus), this protein is Small ribosomal subunit protein bS21 (rpsU).